We begin with the raw amino-acid sequence, 2073 residues long: Fatty acid synthase subunit beta (2073 aa).

The segment at 1–459 (MVEAEQVHQS…VYSTDDAGDL (459 aa)) is acetyltransferase. The active-site For acetyltransferase activity is the S270. Residues 470-858 (ALAVMITEKV…TRGIMFWKEL (389 aa)) are enoyl reductase. Position 1122 is a phosphoserine (S1122). Positions 1155–1644 (GPEYTWFRAI…LPNTELITKL (490 aa)) are dehydratase. The For dehydratase activity role is filled by H1361. The region spanning 1558 to 1667 (PVFVTPPTNS…VEVLNQETSE (110 aa)) is the MaoC-like domain. The segment at 1645–2073 (SHTGMINGRK…LQNWDEYESS (429 aa)) is malonyl/palmitoyl transferase. The active-site For malonyltransferase activity is the S1828. Position 2073 is a phosphoserine (S2073).

The protein belongs to the fungal fatty acid synthetase subunit beta family. In terms of assembly, [Alpha(6)beta(6)] hexamers of two multifunctional subunits (alpha and beta).

The enzyme catalyses acetyl-CoA + n malonyl-CoA + 2n NADPH + 4n H(+) = a long-chain-acyl-CoA + n CoA + n CO2 + 2n NADP(+).. The catalysed reaction is holo-[ACP] + acetyl-CoA = acetyl-[ACP] + CoA. It carries out the reaction holo-[ACP] + malonyl-CoA = malonyl-[ACP] + CoA. It catalyses the reaction a (3R)-hydroxyacyl-[ACP] = a (2E)-enoyl-[ACP] + H2O. The enzyme catalyses a 2,3-saturated acyl-[ACP] + NAD(+) = a (2E)-enoyl-[ACP] + NADH + H(+). The catalysed reaction is (9Z)-octadecenoyl-[ACP] + H2O = (9Z)-octadecenoate + holo-[ACP] + H(+). Its function is as follows. Fatty acid synthetase catalyzes the formation of long-chain fatty acids from acetyl-CoA, malonyl-CoA and NADPH. The beta subunit contains domains for: [acyl-carrier-protein] acetyltransferase and malonyltransferase, S-acyl fatty acid synthase thioesterase, enoyl-[acyl-carrier-protein] reductase, and 3-hydroxypalmitoyl-[acyl-carrier-protein] dehydratase. This chain is Fatty acid synthase subunit beta (fas1), found in Schizosaccharomyces pombe (strain 972 / ATCC 24843) (Fission yeast).